Here is a 117-residue protein sequence, read N- to C-terminus: MSASSLIKWVCYLGDIAASGFLNSIATALIAVLHDAGDNMFNSKEEKKLVDILTKFYKMINKQSDITVPVGQDLQRLALLFANLRSVEIKKNNETDFSNFFTTKLPMHNKFFRYDTK.

A helical membrane pass occupies residues 10–32 (VCYLGDIAASGFLNSIATALIAV).

The protein localises to the membrane. This is an uncharacterized protein from Rickettsia conorii (strain ATCC VR-613 / Malish 7).